The sequence spans 212 residues: MSNPRIEELPDNEEPTKQQVTAEDEGSDSSDSEAEGEEVAGIPAGSQVAFSRNEKKARKSIAKLGLTRVPGITRVTLRRPKNILFVINQPEVYKSPTSNTYIVFGEAKIEDLNSQAQASAAAQLAAQESHDHAGHDHSGHDHSHDHGKGKAVDTEEKKEEEEDDTEEVDATGLEDKDIELVMTQASVSRNKAVKALKENDNDIVNSIMALSI.

2 disordered regions span residues 1–54 and 123–177; these read MSNP…SRNE and QLAA…EDKD. Residues 22-38 are compositionally biased toward acidic residues; it reads AEDEGSDSSDSEAEGEE. Residues 51–116 enclose the NAC-A/B domain; sequence SRNEKKARKS…AKIEDLNSQA (66 aa). Basic and acidic residues predominate over residues 128 to 157; that stretch reads ESHDHAGHDHSGHDHSHDHGKGKAVDTEEK. Over residues 158-169 the composition is skewed to acidic residues; the sequence is KEEEEDDTEEVD. In terms of domain architecture, UBA spans 173-212; that stretch reads LEDKDIELVMTQASVSRNKAVKALKENDNDIVNSIMALSI.

It belongs to the NAC-alpha family. In terms of assembly, part of the nascent polypeptide-associated complex (NAC), consisting of EGD2 and EGD1. NAC associates with ribosomes via EGD1.

Its subcellular location is the cytoplasm. The protein resides in the nucleus. Its function is as follows. Component of the nascent polypeptide-associated complex (NAC), a dynamic component of the ribosomal exit tunnel, protecting the emerging polypeptides from interaction with other cytoplasmic proteins to ensure appropriate nascent protein targeting. The NAC complex also promotes mitochondrial protein import by enhancing productive ribosome interactions with the outer mitochondrial membrane and blocks the inappropriate interaction of ribosomes translating non-secretory nascent polypeptides with translocation sites in the membrane of the endoplasmic reticulum. EGD2 may also be involved in transcription regulation. This chain is Nascent polypeptide-associated complex subunit alpha (egd2), found in Botryotinia fuckeliana (strain B05.10) (Noble rot fungus).